A 532-amino-acid polypeptide reads, in one-letter code: Flavin-containing monooxygenase 3 (532 aa).

FAD is bound by residues 9-13, glutamate 32, 40-41, and 61-62; these read GAGVS, LW, and NS. Residues 60–61 and 195–198 each bind NADP(+); these read TN and SGCD. Residue serine 401 is modified to Phosphoserine. The chain crosses the membrane as a helical span at residues 512 to 532; sequence CHLVKLFVLPVLFIAVFLALI.

It belongs to the FMO family. FAD is required as a cofactor.

It localises to the microsome membrane. The protein resides in the endoplasmic reticulum membrane. The enzyme catalyses trimethylamine + NADPH + O2 = trimethylamine N-oxide + NADP(+) + H2O. The catalysed reaction is N,N-dimethylaniline + NADPH + O2 + H(+) = N,N-dimethylaniline N-oxide + NADP(+) + H2O. It catalyses the reaction hypotaurine + NADPH + O2 + H(+) = taurine + NADP(+) + H2O. It carries out the reaction (S)-nicotine + NADPH + O2 = trans-(S)-nicotine N(1')-oxide + NADP(+) + H2O. The enzyme catalyses albendazole + NADPH + O2 + H(+) = albendazole S-oxide + NADP(+) + H2O. In terms of biological role, essential hepatic enzyme that catalyzes the oxygenation of a wide variety of nitrogen- and sulfur-containing compounds including drugs as well as dietary compounds. Plays an important role in the metabolism of trimethylamine (TMA), via the production of trimethylamine N-oxide (TMAO) metabolite. TMA is generated by the action of gut microbiota using dietary precursors such as choline, choline containing compounds, betaine or L-carnitine. By regulating TMAO concentration, FMO3 directly impacts both platelet responsiveness and rate of thrombus formation. The protein is Flavin-containing monooxygenase 3 (FMO3) of Canis lupus familiaris (Dog).